Consider the following 421-residue polypeptide: Putative leucine-rich repeat protein R380 (421 aa).

7 LRR repeats span residues 48 to 69 (YLEKLFINNNNLKQLPDPQYLP), 70 to 85 (KIKELVCSYNILTHIP), 89 to 110 (NLIKLDISHNQVQNINVYNQSK), 111 to 129 (LLYLDCSFNKNIETRIFLP), 130 to 150 (ECRELYVNDANISKLEINYFP), 151 to 172 (NLRILDCSNNNISRISSLSSLI), and 173 to 191 (ELNIQNNHITELPSYPQLV).

The protein is Putative leucine-rich repeat protein R380 of Acanthamoeba polyphaga (Amoeba).